A 538-amino-acid chain; its full sequence is Dihomomethionine N-hydroxylase (538 aa).

The helical transmembrane segment at 8–28 threads the bilayer; sequence LPYPFHILLVFILSMASITLL.

The protein belongs to the cytochrome P450 family. It depends on heme as a cofactor. In terms of tissue distribution, highly expressed in cotyledons, leaves, stems and siliques. Detected in flowers and lateral roots, but not in the main root. Expressed only in the vascular bundles in apical plant parts.

It is found in the endoplasmic reticulum membrane. It carries out the reaction an L-polyhomomethionine + 2 reduced [NADPH--hemoprotein reductase] + 2 O2 = an (E)-omega-(methylsulfanyl)-alkanal oxime + 2 oxidized [NADPH--hemoprotein reductase] + CO2 + 3 H2O + 2 H(+). It catalyses the reaction L-dihomomethionine + 2 reduced [NADPH--hemoprotein reductase] + 2 O2 = (E)-5-(methylsulfanyl)pentanal oxime + 2 oxidized [NADPH--hemoprotein reductase] + CO2 + 3 H2O + 2 H(+). The catalysed reaction is L-trihomomethionine + 2 reduced [NADPH--hemoprotein reductase] + 2 O2 = (E)-6-(methylsulfanyl)hexanal oxime + 2 oxidized [NADPH--hemoprotein reductase] + CO2 + 3 H2O + 2 H(+). Its function is as follows. Catalyzes the conversion of the short chain elongated methionines di-, tri-, and tetrahomomethionine to their respective aldoximes 5-methylthiopentanaldoxime, 6-methylthiohexanaldoxime, and 7-methylheptanaldoxime. This chain is Dihomomethionine N-hydroxylase (CYP79F1), found in Arabidopsis thaliana (Mouse-ear cress).